We begin with the raw amino-acid sequence, 313 residues long: Flagellin (313 aa).

Coiled-coil stretches lie at residues I5–S33 and V97–T117. Tandem repeats lie at residues K179 to D197, K199 to Q217, V255 to N259, and V262 to S266. The 2 X 19 AA approximate tandem repeats stretch occupies residues K179–Q217. The segment covering A190–K199 has biased composition (low complexity). The segment at A190–Q211 is disordered. A coiled-coil region spans residues E252–L298. The 2 X 5 AA approximate repeats of V-N-N-L-N stretch occupies residues V255–S266.

It belongs to the bacterial flagellin family.

Its subcellular location is the secreted. It localises to the bacterial flagellum. In terms of biological role, flagellin is the subunit protein which polymerizes to form the filaments of bacterial flagella. This is Flagellin (fliC) from Xenorhabdus nematophila (Achromobacter nematophilus).